The following is a 318-amino-acid chain: Protein W (318 aa).

2 disordered regions span residues 1-24 and 38-318; these read MDQDALISKEDSEVEREASGGRES and SEPT…KKGA. Over residues 7 to 20 the composition is skewed to basic and acidic residues; the sequence is ISKEDSEVEREASG. Over residues 50 to 61 the composition is skewed to polar residues; sequence LHNTINTLQRPG. 2 stretches are compositionally biased toward basic and acidic residues: residues 99–110 and 150–168; these read AEAHARNVDKQN and GAEDENREMAANPDKRGED. Serine 249, serine 257, and serine 260 each carry phosphoserine; by host.

The chain is Protein W (P/V/C) from Sendai virus (strain Hamamatsu) (SeV).